The following is a 141-amino-acid chain: Protein Turandot Z (141 aa).

An N-terminal signal peptide occupies residues 1 to 23 (MYFAIRLSFVLAVLFCLTGNGNA).

Belongs to the Turandot family.

The protein localises to the secreted. Functionally, a humoral factor that may play a role in stress tolerance. The polypeptide is Protein Turandot Z (Drosophila yakuba (Fruit fly)).